Here is a 336-residue protein sequence, read N- to C-terminus: Zinc-type alcohol dehydrogenase-like protein SE_1777 (336 aa).

This sequence belongs to the zinc-containing alcohol dehydrogenase family. Quinone oxidoreductase subfamily.

The sequence is that of Zinc-type alcohol dehydrogenase-like protein SE_1777 from Staphylococcus epidermidis (strain ATCC 12228 / FDA PCI 1200).